A 70-amino-acid polypeptide reads, in one-letter code: NAD(P)H-quinone oxidoreductase subunit L (70 aa).

2 consecutive transmembrane segments (helical) span residues 2-22 (IVALLYLILAGAYLLVIPIAV) and 39-59 (LLMYFLVFFFFPGLLVLSPFA).

The protein belongs to the complex I NdhL subunit family. As to quaternary structure, NDH-1 can be composed of about 15 different subunits; different subcomplexes with different compositions have been identified which probably have different functions.

Its subcellular location is the cellular thylakoid membrane. It carries out the reaction a plastoquinone + NADH + (n+1) H(+)(in) = a plastoquinol + NAD(+) + n H(+)(out). It catalyses the reaction a plastoquinone + NADPH + (n+1) H(+)(in) = a plastoquinol + NADP(+) + n H(+)(out). Functionally, NDH-1 shuttles electrons from an unknown electron donor, via FMN and iron-sulfur (Fe-S) centers, to quinones in the respiratory and/or the photosynthetic chain. The immediate electron acceptor for the enzyme in this species is believed to be plastoquinone. Couples the redox reaction to proton translocation, and thus conserves the redox energy in a proton gradient. Cyanobacterial NDH-1 also plays a role in inorganic carbon-concentration. This Nostoc punctiforme (strain ATCC 29133 / PCC 73102) protein is NAD(P)H-quinone oxidoreductase subunit L.